We begin with the raw amino-acid sequence, 66 residues long: MPT51 antigen (66 aa).

The N-terminal stretch at 1–38 is a signal peptide; that stretch reads MTVVRGVSALLRVFCIAMLAAGLGVALQPAAVTGAARA.

The protein belongs to the mycobacterial A85 antigen family. As to quaternary structure, homodimer.

It localises to the secreted. May have a role in host tissue attachment, whereby ligands may include the serum protein fibronectin and small sugars. This is MPT51 antigen (mpt51) from Mycobacterium avium.